The following is a 191-amino-acid chain: Large ribosomal subunit protein uL5 (191 aa).

Belongs to the universal ribosomal protein uL5 family. In terms of assembly, part of the 50S ribosomal subunit; part of the 5S rRNA/L5/L18/L25 subcomplex. Contacts the 5S rRNA and the P site tRNA. Forms a bridge to the 30S subunit in the 70S ribosome.

Functionally, this is one of the proteins that bind and probably mediate the attachment of the 5S RNA into the large ribosomal subunit, where it forms part of the central protuberance. In the 70S ribosome it contacts protein S13 of the 30S subunit (bridge B1b), connecting the 2 subunits; this bridge is implicated in subunit movement. Contacts the P site tRNA; the 5S rRNA and some of its associated proteins might help stabilize positioning of ribosome-bound tRNAs. The protein is Large ribosomal subunit protein uL5 of Micrococcus luteus (strain ATCC 4698 / DSM 20030 / JCM 1464 / CCM 169 / CCUG 5858 / IAM 1056 / NBRC 3333 / NCIMB 9278 / NCTC 2665 / VKM Ac-2230) (Micrococcus lysodeikticus).